We begin with the raw amino-acid sequence, 678 residues long: MSFSNGNMASYMTSSNGEEQSINNKNDIDDNSAYRRNNFRNSSNSGSHTFQLSDLDLDVDMRMDSANSSEKISKNLSSGIPDSFDSNVNSLLSPSSGSYSADLNYQSLYKPDLPQQQLQQQQLQQQQQQQQQQQQQQQKQTPTLKVEQSDTFQWDDILTPADNQHRPSLTNQFLSPRSNYDGTTRSSGIDSNYSDTESNYHTPYLYPQDLVSSPAMSHLTANNDDFDDLLSVASMNSNYLLPVNSHGYKHISNLDELDDLLSLTYSDNNLLSASNNSDFNNSNNGIINTADTQNSTIAINKSKVGTNQKMLLTIPTSSTPSPSTHAAPVTPIISIQEFNEGHFPVKNEDDGTLQLKVRDNESYSATNNNNLLRPDDNDYNNEALSDIDRSFEDIINGRKLKLKKSRRRSSQTSNNSFTSRRSSRSRSISPDEKAKSISANREKLLEMADLLPSSENDNNRERYDNDSKTSYNTINSSNFNEDNNNNNLLTSKPKIESGIVNIKNELDDTSKDLGILLDIDSLGQFEQKVGFKNDDNHENNDNGTFSVKKNDNLEKLDSVTNNRKNPANFACDVCGKKFTRPYNLKSHLRTHTNERPFICSICGKAFARQHDRKRHEDLHTGKKRYVCGGKLKDGKPWGCGKKFARSDALGRHFKTESGRRCITPLYEEARQEKSGQES.

Positions 1–21 are enriched in polar residues; it reads MSFSNGNMASYMTSSNGEEQS. Disordered regions lie at residues 1-50 and 159-195; these read MSFS…SHTF and TPADNQHRPSLTNQFLSPRSNYDGTTRSSGIDSNYSD. Over residues 34-47 the composition is skewed to low complexity; sequence YRRNNFRNSSNSGS. The segment covering 166-195 has biased composition (polar residues); sequence RPSLTNQFLSPRSNYDGTTRSSGIDSNYSD. Thr170 is subject to Phosphothreonine. 3 positions are modified to phosphoserine: Ser175, Ser245, and Ser385. The disordered stretch occupies residues 401-486; that stretch reads KLKKSRRRSS…SNFNEDNNNN (86 aa). Positions 410–428 are enriched in low complexity; that stretch reads SQTSNNSFTSRRSSRSRSI. Basic and acidic residues-rich tracts occupy residues 429-446 and 457-467; these read SPDEKAKSISANREKLLE and DNNRERYDNDS. The span at 472–486 shows a compositional bias: low complexity; it reads NTINSSNFNEDNNNN. 2 C2H2-type zinc fingers span residues 569–591 and 597–619; these read FACDVCGKKFTRPYNLKSHLRTH and FICSICGKAFARQHDRKRHEDLH.

In terms of processing, phosphorylated. Dephosphorylated by calcineurin which leads to rapid translocation from the cytoplasm to the nucleus. Phosphorylated by the cyclin-CDK PHO80-PHO85.

Its subcellular location is the nucleus. The protein localises to the cytoplasm. Functionally, involved in the regulation of calcium ion homeostasis. Binds to the calcineurin-dependent response element. Transcriptionally regulates PMC1, PMR1, PMR2A and FKS2. This chain is Transcriptional regulator CRZ1 (CRZ1), found in Saccharomyces cerevisiae (strain ATCC 204508 / S288c) (Baker's yeast).